We begin with the raw amino-acid sequence, 72 residues long: Protein SlyX homolog (72 aa).

The interval 53–72 (KDISPSNIRREEEETPPPHY) is disordered.

Belongs to the SlyX family.

The protein is Protein SlyX homolog of Marinobacter nauticus (strain ATCC 700491 / DSM 11845 / VT8) (Marinobacter aquaeolei).